Consider the following 265-residue polypeptide: tRNA pseudouridine synthase A (265 aa).

Residue D55 is the Nucleophile of the active site. Residue Y113 coordinates substrate.

It belongs to the tRNA pseudouridine synthase TruA family. In terms of assembly, homodimer.

The enzyme catalyses uridine(38/39/40) in tRNA = pseudouridine(38/39/40) in tRNA. Formation of pseudouridine at positions 38, 39 and 40 in the anticodon stem and loop of transfer RNAs. This Levilactobacillus brevis (strain ATCC 367 / BCRC 12310 / CIP 105137 / JCM 1170 / LMG 11437 / NCIMB 947 / NCTC 947) (Lactobacillus brevis) protein is tRNA pseudouridine synthase A.